Consider the following 99-residue polypeptide: MARITVEDCLEVVNNRFELVMMASKRARQLANGVPPLIENTNSEDKPTVMALREIAARKINSKMIDEIEKAERERAEREAMEWAAAEVVADEDMSKSDD.

Belongs to the RNA polymerase subunit omega family. As to quaternary structure, the RNAP catalytic core consists of 2 alpha, 1 beta, 1 beta' and 1 omega subunit. When a sigma factor is associated with the core the holoenzyme is formed, which can initiate transcription.

The enzyme catalyses RNA(n) + a ribonucleoside 5'-triphosphate = RNA(n+1) + diphosphate. Its function is as follows. Promotes RNA polymerase assembly. Latches the N- and C-terminal regions of the beta' subunit thereby facilitating its interaction with the beta and alpha subunits. This Xylella fastidiosa (strain Temecula1 / ATCC 700964) protein is DNA-directed RNA polymerase subunit omega.